The primary structure comprises 199 residues: NADH-quinone oxidoreductase subunit C (199 aa).

It belongs to the complex I 30 kDa subunit family. In terms of assembly, NDH-1 is composed of 14 different subunits. Subunits NuoB, C, D, E, F, and G constitute the peripheral sector of the complex.

It localises to the cell inner membrane. The enzyme catalyses a quinone + NADH + 5 H(+)(in) = a quinol + NAD(+) + 4 H(+)(out). Its function is as follows. NDH-1 shuttles electrons from NADH, via FMN and iron-sulfur (Fe-S) centers, to quinones in the respiratory chain. The immediate electron acceptor for the enzyme in this species is believed to be ubiquinone. Couples the redox reaction to proton translocation (for every two electrons transferred, four hydrogen ions are translocated across the cytoplasmic membrane), and thus conserves the redox energy in a proton gradient. The sequence is that of NADH-quinone oxidoreductase subunit C from Polynucleobacter necessarius subsp. necessarius (strain STIR1).